The primary structure comprises 118 residues: Large ribosomal subunit protein bL20 (118 aa).

This sequence belongs to the bacterial ribosomal protein bL20 family.

In terms of biological role, binds directly to 23S ribosomal RNA and is necessary for the in vitro assembly process of the 50S ribosomal subunit. It is not involved in the protein synthesizing functions of that subunit. This is Large ribosomal subunit protein bL20 from Macrococcus caseolyticus (strain JCSC5402) (Macrococcoides caseolyticum).